A 455-amino-acid polypeptide reads, in one-letter code: Tryptophan dimethylallyltransferase (455 aa).

L-tryptophan contacts are provided by residues 79-80 (VL) and Glu-88. The substrate site is built by Arg-99, Lys-186, and Tyr-188. Residues Tyr-190 and Arg-256 each coordinate L-tryptophan. Residues Arg-269, Lys-271, Tyr-273, Gln-355, Tyr-357, Tyr-421, and Tyr-425 each coordinate substrate.

The protein belongs to the tryptophan dimethylallyltransferase family. As to quaternary structure, homodimer.

It catalyses the reaction L-tryptophan + dimethylallyl diphosphate = 4-(3-methylbut-2-enyl)-L-tryptophan + diphosphate. Its pathway is alkaloid biosynthesis; ergot alkaloid biosynthesis. Functionally, tryptophan dimethylallyltransferase; part of the gene cluster that mediates the biosynthesis of fungal ergot alkaloid. DmaW catalyzes the first step of ergot alkaloid biosynthesis by condensing dimethylallyl diphosphate (DMAP) and tryptophan to form 4-dimethylallyl-L-tryptophan. The second step is catalyzed by the methyltransferase easF that methylates 4-dimethylallyl-L-tryptophan in the presence of S-adenosyl-L-methionine, resulting in the formation of 4-dimethylallyl-L-abrine. The catalase easC and the FAD-dependent oxidoreductase easE then transform 4-dimethylallyl-L-abrine to chanoclavine-I which is further oxidized by easD in the presence of NAD(+), resulting in the formation of chanoclavine-I aldehyde. Agroclavine dehydrogenase easG then mediates the conversion of chanoclavine-I aldehyde to agroclavine via a non-enzymatic adduct reaction: the substrate is an iminium intermediate that is formed spontaneously from chanoclavine-I aldehyde in the presence of glutathione. Further conversion of agroclavine to paspalic acid is a two-step process involving oxidation of agroclavine to elymoclavine and of elymoclavine to paspalic acid, the second step being performed by the elymoclavine oxidase cloA. However, cloA does not encode a functional enzyme indicating that C.fusiformis terminates its ergot alkaloid pathway at elymoclavine. The chain is Tryptophan dimethylallyltransferase from Claviceps fusiformis (Ergot fungus).